The following is a 247-amino-acid chain: 3-deoxy-manno-octulosonate cytidylyltransferase (247 aa).

Belongs to the KdsB family.

Its subcellular location is the cytoplasm. The catalysed reaction is 3-deoxy-alpha-D-manno-oct-2-ulosonate + CTP = CMP-3-deoxy-beta-D-manno-octulosonate + diphosphate. It functions in the pathway nucleotide-sugar biosynthesis; CMP-3-deoxy-D-manno-octulosonate biosynthesis; CMP-3-deoxy-D-manno-octulosonate from 3-deoxy-D-manno-octulosonate and CTP: step 1/1. It participates in bacterial outer membrane biogenesis; lipopolysaccharide biosynthesis. Activates KDO (a required 8-carbon sugar) for incorporation into bacterial lipopolysaccharide in Gram-negative bacteria. This is 3-deoxy-manno-octulosonate cytidylyltransferase from Chlorobium phaeobacteroides (strain DSM 266 / SMG 266 / 2430).